The primary structure comprises 385 residues: DNA replication and repair protein RecF (385 aa).

30–37 (GPNGNGKT) lines the ATP pocket.

Belongs to the RecF family.

It is found in the cytoplasm. Its function is as follows. The RecF protein is involved in DNA metabolism; it is required for DNA replication and normal SOS inducibility. RecF binds preferentially to single-stranded, linear DNA. It also seems to bind ATP. The polypeptide is DNA replication and repair protein RecF (Mycobacterium leprae (strain Br4923)).